A 544-amino-acid polypeptide reads, in one-letter code: Chaperonin GroEL 1 (544 aa).

ATP-binding positions include 30–33 (TLGP), Lys51, 87–91 (DGTTT), Gly415, 479–481 (NAA), and Asp495.

Belongs to the chaperonin (HSP60) family. As to quaternary structure, forms a cylinder of 14 subunits composed of two heptameric rings stacked back-to-back. Interacts with the co-chaperonin GroES.

It is found in the cytoplasm. The enzyme catalyses ATP + H2O + a folded polypeptide = ADP + phosphate + an unfolded polypeptide.. Functionally, together with its co-chaperonin GroES, plays an essential role in assisting protein folding. The GroEL-GroES system forms a nano-cage that allows encapsulation of the non-native substrate proteins and provides a physical environment optimized to promote and accelerate protein folding. This Vibrio cholerae serotype O1 (strain ATCC 39315 / El Tor Inaba N16961) protein is Chaperonin GroEL 1.